A 553-amino-acid polypeptide reads, in one-letter code: Arginine--tRNA ligase (553 aa).

The 'HIGH' region signature appears at 130–140 (ANPTGDLHIGH).

This sequence belongs to the class-I aminoacyl-tRNA synthetase family. As to quaternary structure, monomer.

It localises to the cytoplasm. The enzyme catalyses tRNA(Arg) + L-arginine + ATP = L-arginyl-tRNA(Arg) + AMP + diphosphate. In Staphylococcus aureus (strain bovine RF122 / ET3-1), this protein is Arginine--tRNA ligase.